The following is a 271-amino-acid chain: Pyridoxine kinase (271 aa).

Asn141 provides a ligand contact to ATP. Glu144 serves as a coordination point for Mg(2+). ATP-binding positions include 178–182, Asp190, Ile206, Gly215, and Lys240; that span reads TGGGK.

The protein belongs to the ThiD family. In terms of assembly, homodimer.

It catalyses the reaction pyridoxal + ATP = pyridoxal 5'-phosphate + ADP + H(+). In terms of biological role, phosphorylates B6 vitamers; functions in a salvage pathway. Uses pyridoxal, pyridoxine, and pyridoxamine as substrates. Can also use hydroxymethylpyrimidine (HMP) as substrate. In Bacillus subtilis (strain 168), this protein is Pyridoxine kinase (pdxK).